Consider the following 304-residue polypeptide: Probable 5-dehydro-4-deoxyglucarate dehydratase (304 aa).

Belongs to the DapA family.

It carries out the reaction 5-dehydro-4-deoxy-D-glucarate + H(+) = 2,5-dioxopentanoate + CO2 + H2O. It functions in the pathway carbohydrate acid metabolism; D-glucarate degradation; 2,5-dioxopentanoate from D-glucarate: step 2/2. The polypeptide is Probable 5-dehydro-4-deoxyglucarate dehydratase (Pseudarthrobacter chlorophenolicus (strain ATCC 700700 / DSM 12829 / CIP 107037 / JCM 12360 / KCTC 9906 / NCIMB 13794 / A6) (Arthrobacter chlorophenolicus)).